Reading from the N-terminus, the 35-residue chain is Beta/delta-theraphotoxin-Pre1a (35 aa).

3 disulfide bridges follow: Cys3–Cys18, Cys10–Cys23, and Cys17–Cys30.

The protein belongs to the neurotoxin 10 (Hwtx-1) family. As to expression, expressed by the venom gland.

It localises to the secreted. Functionally, gating-modifier toxin that both inhibits the peak current of human Nav1.1/SCN1A, rat Nav1.2/SCN2A, human Nav1.6/SCN8A, and human Nav1.7/SCN9A and concurrently inhibits fast inactivation of human Nav1.1 and rat Nav1.3/SCN3A. The relative rank order potency for Nav modulation is Nav1.3 (inactivation EC(50)=45 nM) &gt; Nav1.7 &gt; Nav1.2 &gt; Nav1.1 (inactivation) &gt; Nav1.1 &gt; Nav1.6 &gt; Nav1.3 (IC(50)=8 uM). The DII and DIV S3-S4 loops of Nav channel voltage sensors are important for the interaction of this toxin with Nav channels but cannot account for its unique subtype selectivity. It is the variability of the S1-S2 loops between NaV channels which contributes substantially to the selectivity profile observed for this toxin, particularly with regards to fast inactivation. This toxin may bind the channel in the resting state. This chain is Beta/delta-theraphotoxin-Pre1a, found in Psalmopoeus reduncus (Costa Rican orangemouth tarantula).